Consider the following 210-residue polypeptide: MSDAKELKQVLTGPIVNNNPIALQVLGVCSALAVTSKLETALVMALALTAVTAFSNLFISMIRNHIPSSVRIIVQMTIIASLVIVVDQLLQAYAYQISKQLSVFVGLIITNCIVMGRAEAYAMKTPPMMSFMDGIGNGLGYGAILLAVGFVRELFGNGSLFGVEILHKISDGGWYQPNGLLLLPPSAFFLIGVLIWIIRTYKPEQVEAKG.

6 consecutive transmembrane segments (helical) span residues 14–34 (PIVN…ALAV), 42–62 (LVMA…ISMI), 72–92 (IIVQ…LLQA), 103–123 (VFVG…AYAM), 131–151 (FMDG…VGFV), and 178–198 (NGLL…IWII).

The protein belongs to the NqrDE/RnfAE family. As to quaternary structure, composed of six subunits; NqrA, NqrB, NqrC, NqrD, NqrE and NqrF.

It is found in the cell inner membrane. It catalyses the reaction a ubiquinone + n Na(+)(in) + NADH + H(+) = a ubiquinol + n Na(+)(out) + NAD(+). Functionally, NQR complex catalyzes the reduction of ubiquinone-1 to ubiquinol by two successive reactions, coupled with the transport of Na(+) ions from the cytoplasm to the periplasm. NqrA to NqrE are probably involved in the second step, the conversion of ubisemiquinone to ubiquinol. This is Na(+)-translocating NADH-quinone reductase subunit D from Shewanella baltica (strain OS223).